Here is a 339-residue protein sequence, read N- to C-terminus: Ribosomal RNA small subunit methyltransferase H (339 aa).

Residues 40 to 42 (GGY), aspartate 58, phenylalanine 85, aspartate 106, and glutamine 113 each bind S-adenosyl-L-methionine.

It belongs to the methyltransferase superfamily. RsmH family.

The protein resides in the cytoplasm. It catalyses the reaction cytidine(1402) in 16S rRNA + S-adenosyl-L-methionine = N(4)-methylcytidine(1402) in 16S rRNA + S-adenosyl-L-homocysteine + H(+). In terms of biological role, specifically methylates the N4 position of cytidine in position 1402 (C1402) of 16S rRNA. This chain is Ribosomal RNA small subunit methyltransferase H, found in Parvibaculum lavamentivorans (strain DS-1 / DSM 13023 / NCIMB 13966).